The primary structure comprises 166 residues: NAD(P)H-quinone oxidoreductase subunit I, chloroplastic (166 aa).

4Fe-4S ferredoxin-type domains follow at residues 55-84 and 95-124; these read GRIHFEFDKCIACEVCVRVCPIDLPVVDWK and LNYSIDFGICIFCGNCVEYCPTNCLSMTEE. [4Fe-4S] cluster-binding residues include Cys-64, Cys-67, Cys-70, Cys-74, Cys-104, Cys-107, Cys-110, and Cys-114.

It belongs to the complex I 23 kDa subunit family. As to quaternary structure, NDH is composed of at least 16 different subunits, 5 of which are encoded in the nucleus. [4Fe-4S] cluster serves as cofactor.

The protein localises to the plastid. Its subcellular location is the chloroplast thylakoid membrane. It catalyses the reaction a plastoquinone + NADH + (n+1) H(+)(in) = a plastoquinol + NAD(+) + n H(+)(out). The catalysed reaction is a plastoquinone + NADPH + (n+1) H(+)(in) = a plastoquinol + NADP(+) + n H(+)(out). In terms of biological role, NDH shuttles electrons from NAD(P)H:plastoquinone, via FMN and iron-sulfur (Fe-S) centers, to quinones in the photosynthetic chain and possibly in a chloroplast respiratory chain. The immediate electron acceptor for the enzyme in this species is believed to be plastoquinone. Couples the redox reaction to proton translocation, and thus conserves the redox energy in a proton gradient. The chain is NAD(P)H-quinone oxidoreductase subunit I, chloroplastic from Acanthospermum australe (Paraguayan starburr).